A 784-amino-acid chain; its full sequence is Cadherin-5 (784 aa).

Residues 1-25 form the signal peptide; sequence MQRLMMLLATSGACLGLLAVAAVAA. Positions 26-47 are excised as a propeptide; that stretch reads AGANPAQRDTHSLLPTHRRQKR. Cadherin domains are found at residues 48–151, 152–258, 259–372, 373–477, and 478–593; these read DWIW…WPVF, THRL…FPFF, TQTK…PPIF, QQPF…DNAP, and EFAK…MAAQ. Over 48-599 the chain is Extracellular; that stretch reads DWIWNQMHID…MAAQVGVSIQ (552 aa). Ca(2+) contacts are provided by E58 and E59. N61 is a glycosylation site (N-linked (GlcNAc...) (complex) asparagine). D109 and E111 together coordinate Ca(2+). N-linked (GlcNAc...) (complex) asparagine glycosylation occurs at N112. D143, V144, N145, D146, and N147 together coordinate Ca(2+). The N-linked (GlcNAc...) asparagine glycan is linked to N157. The Ca(2+) site is built by D177, D179, H186, and D231. A glycan (N-linked (GlcNAc...) asparagine) is linked at N362. The N-linked (GlcNAc...) (complex) asparagine glycan is linked to N442. Residues N523 and N535 are each glycosylated (N-linked (GlcNAc...) asparagine). Residues 600 to 620 traverse the membrane as a helical segment; sequence AVVAILLCILTITVITLLIFL. The segment at 621-660 is required for interaction with PALS1; sequence RRRLRKQARAHGKSVPEIHEQLVTYDEEGGGEMDTTSYDV. Residues 621-784 are Cytoplasmic-facing; sequence RRRLRKQARA…GSDPREELLY (164 aa).

As to quaternary structure, part of a complex composed of AMOTL2, MAGI1 and CDH5, within the complex AMOTL2 acts as a scaffold protein for the interaction of MAGI1 with CDH5. The complex is required for coupling actin fibers to cell junctions in endothelial cells. Within the complex AMOTL2 (via its N-terminus) interacts with CDH5. Interacts (via cadherin 5 domain) with PTPRB. Interacts with TRPC4. Interacts with KRIT1. Interacts with PARD3. Interacts with RTN4 (isoform B). Interacts with PALS1; the interaction promotes PALS1 localization to cell junctions and is required for CDH5-mediated vascular lumen formation and endothelial cell. Interacts with CTNND1/p120-catenin; the interaction controls CADH5 endocytosis. In terms of processing, phosphorylated on tyrosine residues by KDR/VEGFR-2. Dephosphorylated by PTPRB. Post-translationally, O-glycosylated. As to expression, expressed in endothelial cells (at protein level). Expressed in the brain.

It localises to the cell junction. Its subcellular location is the adherens junction. It is found in the cell membrane. The protein resides in the cytoplasm. Its function is as follows. Cadherins are calcium-dependent cell adhesion proteins. They preferentially interact with themselves in a homophilic manner in connecting cells; cadherins may thus contribute to the sorting of heterogeneous cell types. This cadherin may play a important role in endothelial cell biology through control of the cohesion and organization of the intercellular junctions. It associates with alpha-catenin forming a link to the cytoskeleton. Plays a role in coupling actin fibers to cell junctions in endothelial cells, via acting as a cell junctional complex anchor for AMOTL2 and MAGI1. Acts in concert with KRIT1 and PALS1 to establish and maintain correct endothelial cell polarity and vascular lumen. These effects are mediated by recruitment and activation of the Par polarity complex and RAP1B. Required for activation of PRKCZ and for the localization of phosphorylated PRKCZ, PARD3, TIAM1 and RAP1B to the cell junction. Associates with CTNND1/p120-catenin to control CADH5 endocytosis. The sequence is that of Cadherin-5 from Homo sapiens (Human).